The following is a 185-amino-acid chain: uncharacterized protein (185 aa).

3 helical membrane passes run 9-29, 72-92, and 111-131; these read LVAA…WAFL, VLFF…ILIV, and FFFI…IPFL.

It localises to the cell membrane. This is an uncharacterized protein from Bacillus subtilis (strain 168).